The chain runs to 436 residues: Probable protein phosphatase 2C 15 (436 aa).

The PPM-type phosphatase domain maps to 30–302; that stretch reads KAAKMEKPIV…DDTTCIVVDI (273 aa). Mn(2+) contacts are provided by Asp-78, Gly-79, Asp-254, and Asp-293.

This sequence belongs to the PP2C family. It depends on Mg(2+) as a cofactor. Requires Mn(2+) as cofactor.

It catalyses the reaction O-phospho-L-seryl-[protein] + H2O = L-seryl-[protein] + phosphate. The enzyme catalyses O-phospho-L-threonyl-[protein] + H2O = L-threonyl-[protein] + phosphate. This is Probable protein phosphatase 2C 15 from Arabidopsis thaliana (Mouse-ear cress).